Reading from the N-terminus, the 352-residue chain is Rhodopsin (352 aa).

Over 1–36 the chain is Extracellular; sequence MNGTEGPDFYIPFSNKTGVVRSPFEYPQYYLAEPWK. N-linked (GlcNAc...) asparagine glycosylation is found at Asn-2 and Asn-15. The chain crosses the membrane as a helical span at residues 37–61; that stretch reads YSALAAYMFMLIILGFPINFLTLYV. The Cytoplasmic portion of the chain corresponds to 62-73; that stretch reads TVQHKKLRSPLN. Residues 74 to 96 form a helical membrane-spanning segment; sequence YILLNLAVADLFMVLGGFTTTLY. The Extracellular portion of the chain corresponds to 97-110; sequence TSMNGYFVFGVTGC. Cys-110 and Cys-187 are joined by a disulfide. A helical transmembrane segment spans residues 111–133; the sequence is YFEGFFATLGGEVALWCLVVLAI. The short motif at 134 to 136 is the 'Ionic lock' involved in activated form stabilization element; the sequence is ERY. At 134–152 the chain is on the cytoplasmic side; that stretch reads ERYIVVCKPMSNFRFGENH. Residues 153–173 traverse the membrane as a helical segment; the sequence is AIMGVVFTWIMALTCAAPPLV. Over 174-202 the chain is Extracellular; it reads GWSRYIPEGMQCSCGVDYYTLKPEVNNES. Residues 203–224 traverse the membrane as a helical segment; the sequence is FVIYMFVVHFAIPLAVIFFCYG. Over 225–252 the chain is Cytoplasmic; it reads RLVCTVKEAAAQQQESATTQKAEKEVTR. The chain crosses the membrane as a helical span at residues 253 to 274; that stretch reads MVIIMVVSFLICWVPYASVAFY. The Extracellular segment spans residues 275–286; that stretch reads IFSNQGSDFGPV. Residues 287–308 traverse the membrane as a helical segment; the sequence is FMTIPAFFAKSSAIYNPVIYIV. Lys-296 is modified (N6-(retinylidene)lysine). Residues 309–352 are Cytoplasmic-facing; that stretch reads MNKQFRNCMITTLCCGKNPLGDDETATGSKTETSSVSTSQVSPA. Residues Cys-322 and Cys-323 are each lipidated (S-palmitoyl cysteine). The disordered stretch occupies residues 332–352; that stretch reads ETATGSKTETSSVSTSQVSPA. Over residues 335–352 the composition is skewed to low complexity; sequence TGSKTETSSVSTSQVSPA.

This sequence belongs to the G-protein coupled receptor 1 family. Opsin subfamily. Post-translationally, contains one covalently linked retinal chromophore. Upon light absorption, the covalently bound 11-cis-retinal is converted to all-trans-retinal. After hydrolysis of the Schiff base and release of the covalently bound all-trans-retinal, active rhodopsin is regenerated by binding of a fresh molecule of 11-cis-retinal. As to expression, expressed in rod-shaped photoreceptor cells in the retina that mediate vision in dim ligh (at protein level).

It is found in the membrane. The protein localises to the cell projection. Its subcellular location is the cilium. The protein resides in the photoreceptor outer segment. Photoreceptor required for image-forming vision at low light intensity. Required for photoreceptor cell viability after birth. Light-induced isomerization of 11-cis to all-trans retinal triggers a conformational change that activates signaling via G-proteins. Subsequent receptor phosphorylation mediates displacement of the bound G-protein alpha subunit by arrestin and terminates signaling. This is Rhodopsin (RHO) from Alligator mississippiensis (American alligator).